Here is a 376-residue protein sequence, read N- to C-terminus: Probable allantoicase (376 aa).

The protein belongs to the allantoicase family.

The catalysed reaction is allantoate + H2O = (S)-ureidoglycolate + urea. Its pathway is nitrogen metabolism; (S)-allantoin degradation; (S)-ureidoglycolate from allantoate (aminidohydrolase route): step 1/1. This Streptomyces avermitilis (strain ATCC 31267 / DSM 46492 / JCM 5070 / NBRC 14893 / NCIMB 12804 / NRRL 8165 / MA-4680) protein is Probable allantoicase.